We begin with the raw amino-acid sequence, 818 residues long: MAFSRLTSTHQSNHNGYSNSNKKGQSLPLTLSIDVESPPCVLYGSAMESSGAVLSGLFTVTVVDPYSSAEDKSLKNTESNVSTTSKSLKRKSTFGSALSSRLSSLSASTSNISPSTSSTSISHSPTPANLRIMAGYTKITITSVTLSLVQKIHFHKPFVPNISSMQTCMNCKTKITNMKSWEIQSNTQDLSVGSHSYPFSYLIPGSVPCSSSLGATAETQVKYELIAVVTYIDPHRNSFSSGHSTPRKEGSSSKKRLLQLAMPIAVTRSIPRGPDKNSLRVFPPTELTAAAVLPNVVYPKSTFPLEMKLDGVSSGDRRWRMRKLSWRIEETTRVKAHACPVHKHELRQLEEQVKIKESEKSKKPRSHIKRYGELGPQIRVAVNSLENMPSQRLPGEPGREQAPNSSGPASTGNVGLDDENPVNEDEEDQPGSEFIHPSDDALRQELLMQQQRARQQQLQQELKNNSSLFTEEVRIISKGEMKSGWKTDFDNNGKIELVTEIDCMGLNSGVSNPVMHASTLQTPSTGNKKPSINVACDIQDPNLGLYVSHILAVEIVVAEETLQYANGQPIRKPNSKNKKETNNNTMNVHNPDQRLAELSPIFANRNTPKVRRMGPEDITPVNSNKSNHSTNKEKASNGASNSNIVSVPTGAARVLRMQFRLTVTERSGLGISWDEEVPPIYQDVELLSPPCYELSINNGIKNKLYSTMSTPVRSEDDFVGGSDEDIGNYESQGLEPGPNVQEVTITQNKLTIPPTAHHYQPASSSQRSLTTVQSPPLESVVSVQGSVPFRGHVLTPHSTRDIRIQNFSDFLDSNRITQ.

The interval 1 to 25 is disordered; it reads MAFSRLTSTHQSNHNGYSNSNKKGQ. Thr93 is modified (phosphothreonine). Positions 352–361 are enriched in basic and acidic residues; that stretch reads QVKIKESEKS. Residues 352-374 form a disordered region; it reads QVKIKESEKSKKPRSHIKRYGEL. At Ser384 the chain carries Phosphoserine. Positions 388-436 are disordered; the sequence is MPSQRLPGEPGREQAPNSSGPASTGNVGLDDENPVNEDEEDQPGSEFIH. Residues 402-413 are compositionally biased toward polar residues; that stretch reads APNSSGPASTGN. The span at 416 to 430 shows a compositional bias: acidic residues; the sequence is LDDENPVNEDEEDQP. Lys486 participates in a covalent cross-link: Glycyl lysine isopeptide (Lys-Gly) (interchain with G-Cter in ubiquitin). Disordered stretches follow at residues 568–590 and 607–644; these read QPIRKPNSKNKKETNNNTMNVHN and TPKVRRMGPEDITPVNSNKSNHSTNKEKASNGASNSNI. Position 619 is a phosphothreonine (Thr619). Over residues 620 to 629 the composition is skewed to polar residues; that stretch reads PVNSNKSNHS. Ser808 bears the Phosphoserine mark.

Belongs to the LDB19 family.

It localises to the cytoplasm. It is found in the golgi apparatus. In terms of biological role, may be involved in protein-linked oligosaccharide phosphorylation since the deletion reduces the negative charge of the cell surface. Involved in the resistance to EDTA, cadmium chloride, cycloheximide, 6-dimethylaminopurine, methyl caffeate, beta-chloro-L-alanine, caffeine and cerulenin. This is Protein LDB19 (LDB19) from Saccharomyces cerevisiae (strain ATCC 204508 / S288c) (Baker's yeast).